Consider the following 651-residue polypeptide: MILRLFILLSIITVYLQLSVGIQQQFEFAITLKSKILFVDEHWNVVNTAAHEFDELSALTFDESEERIYFNDGQHQNSSIFSLRKVGKSNHLAEQTIQRYGNESVGGIAYDPLNRTIYWSDLLQKKIFYASIDTVATEMPKILVDLSEENGTPYGVAIDICGRKLYWTNSNINHPTVERIDLNGTGRLAIIDKNIDSPRGIVVDQGAKRIFWIDDLKGIFFAVMSAQLDGSDVKLVLKDKNHEPQNLAVTRNAIYWTDRTTKSVWSHLKEPEIATTTTTTTTSTTQIPTVEGEEGTGAMDDNDIWPVGDFETTPKKSPLERKINLTEEARGIVARTGFYQLQKDSQCSKVIQLVKQRLDESQQNNRVLNVVDEQLDELQREHCLGGGTYYPQQKFCVCVPGYKGTRCETNECHNFCVHGTCQISEMGYPKCYCQPGYSGERCEVKKCLNFCQNGGDCQLDELTGEASCQCPSNFGGLRCEHNSTEICGLFCRLLKHDSNTSVPFGCHDICEQLAKDSSDLIAIPEYKHLDVCLAPNAWTGSVLMPLMISLILILLLLTIFIHGLRRLYKPKRPHIKKTFVVRKQARTNSSSDTPLTNRPLATEQCEITIENCCNMNICETPCFDPKLVEFAKSNCKDDKKILIHNMEDDLY.

A signal peptide spans 1-21; that stretch reads MILRLFILLSIITVYLQLSVG. Residues 22–540 lie on the Extracellular side of the membrane; sequence IQQQFEFAIT…VCLAPNAWTG (519 aa). Asn-77, Asn-102, and Asn-114 each carry an N-linked (GlcNAc...) asparagine glycan. LDL-receptor class B repeat units follow at residues 115 to 162, 163 to 207, and 208 to 253; these read RTIY…DICG, RKLY…DQGA, and KRIF…TRNA. An N-linked (GlcNAc...) asparagine glycan is attached at Asn-183. Positions 290–311 are disordered; that stretch reads VEGEEGTGAMDDNDIWPVGDFE. The N-linked (GlcNAc...) asparagine glycan is linked to Asn-324. 3 consecutive EGF-like domains span residues 374–408, 409–440, and 443–480; these read QLDE…TRCE, TNEC…YSGE, and EVKK…LRCE. Intrachain disulfides connect Cys-383-Cys-396, Cys-398-Cys-407, Cys-412-Cys-421, Cys-416-Cys-431, Cys-447-Cys-457, Cys-451-Cys-468, and Cys-470-Cys-479. Asn-482 and Asn-499 each carry an N-linked (GlcNAc...) asparagine glycan. A helical transmembrane segment spans residues 541–561; the sequence is SVLMPLMISLILILLLLTIFI. At 562 to 651 the chain is on the cytoplasmic side; it reads HGLRRLYKPK…LIHNMEDDLY (90 aa).

Belongs to the cueball family.

The protein localises to the cell membrane. Functionally, has a role in spermatogenesis and oogenesis. In Drosophila willistoni (Fruit fly), this protein is Protein cueball.